The primary structure comprises 122 residues: Large ribosomal subunit protein uL14 (122 aa).

This sequence belongs to the universal ribosomal protein uL14 family. In terms of assembly, part of the 50S ribosomal subunit. Forms a cluster with proteins L3 and L19. In the 70S ribosome, L14 and L19 interact and together make contacts with the 16S rRNA in bridges B5 and B8.

Its function is as follows. Binds to 23S rRNA. Forms part of two intersubunit bridges in the 70S ribosome. The polypeptide is Large ribosomal subunit protein uL14 (Bdellovibrio bacteriovorus (strain ATCC 15356 / DSM 50701 / NCIMB 9529 / HD100)).